Consider the following 392-residue polypeptide: Large ribosomal subunit protein uL3 (392 aa).

This sequence belongs to the universal ribosomal protein uL3 family. As to quaternary structure, component of the large ribosomal subunit (LSU). Mature N.crassa ribosomes consist of a small (40S) and a large (60S) subunit. The 40S small subunit contains 1 molecule of ribosomal RNA (18S rRNA) and at least 32 different proteins. The large 60S subunit contains 3 rRNA molecules (26S, 5.8S and 5S rRNA) and at least 42 different proteins.

It localises to the cytoplasm. Its function is as follows. Component of the ribosome, a large ribonucleoprotein complex responsible for the synthesis of proteins in the cell. The small ribosomal subunit (SSU) binds messenger RNAs (mRNAs) and translates the encoded message by selecting cognate aminoacyl-transfer RNA (tRNA) molecules. The large subunit (LSU) contains the ribosomal catalytic site termed the peptidyl transferase center (PTC), which catalyzes the formation of peptide bonds, thereby polymerizing the amino acids delivered by tRNAs into a polypeptide chain. The nascent polypeptides leave the ribosome through a tunnel in the LSU and interact with protein factors that function in enzymatic processing, targeting, and the membrane insertion of nascent chains at the exit of the ribosomal tunnel. This Neurospora crassa (strain ATCC 24698 / 74-OR23-1A / CBS 708.71 / DSM 1257 / FGSC 987) protein is Large ribosomal subunit protein uL3 (rpl-3).